We begin with the raw amino-acid sequence, 491 residues long: Tyrosine 3-monooxygenase (491 aa).

Residue serine 19 is modified to Phosphoserine; by CaMK2. Position 31 is a phosphoserine (serine 31). At serine 40 the chain carries Phosphoserine; by CaMK2 and PKA. Positions 324, 329, and 369 each coordinate Fe cation. The residue at position 465 (serine 465) is a Phosphoserine.

It belongs to the biopterin-dependent aromatic amino acid hydroxylase family. Homotetramer. Interacts (when phosphorylated at Ser-19) with YWHAG; one YWHAG dimer bounds to one TH tetramer and this interaction may influence the phosphorylation and dephosphorylation of other sites. Interacts with NT5DC2; the interaction results in reduced phosphorylation and decreased catalytic activity of TH. Requires Fe(2+) as cofactor. Post-translationally, phosphorylated on Ser-19, Ser-31 and Ser-40 by several protein kinases with different site specificities. Phosphorylation at Ser-31 and Ser-40 leads to an increase of TH activity. Phosphorylation at Ser-40 activates the enzyme and also counteracts the feedback inhibition of TH by catecholamines. Phosphorylation of Ser-19 and Ser-31 triggers the proteasomal degradation of TH through the ubiquitin-proteasome pathway. Phosphorylation at Ser-31 facilitates transport of TH from the soma to the nerve terminals via the microtubule network. Phosphorylation at Ser-19 induces the high-affinity binding to the 14-3-3 protein YWHAG; this interaction may influence the phosphorylation and dephosphorylation of other sites. Ser-19 increases the phosphorylation at Ser-40 in a hierarchical manner, leading to increased activity.

The protein resides in the cytoplasm. It localises to the perinuclear region. It is found in the nucleus. Its subcellular location is the cell projection. The protein localises to the axon. The protein resides in the cytoplasmic vesicle. It localises to the secretory vesicle. It is found in the synaptic vesicle. The catalysed reaction is (6R)-L-erythro-5,6,7,8-tetrahydrobiopterin + L-tyrosine + O2 = (4aS,6R)-4a-hydroxy-L-erythro-5,6,7,8-tetrahydrobiopterin + L-dopa. Its pathway is catecholamine biosynthesis; dopamine biosynthesis; dopamine from L-tyrosine: step 1/2. Inhibited in feedback fashion by the catecholamine neurotransmitters, especially by dopamine in competition with tetrahydrobiopterin. Phosphorylation of several Ser/Thr residues in the N-terminus regulates the catalytic activity. Ser-31 and Ser-40 are readily phosphorylated to activate the catalytic activity. A Cysteine modification induced by N-ethylmaleimide (NEM), inhibits tyrosine 3-monooxygenase activity through the modification of the Cys-170. Functionally, catalyzes the conversion of L-tyrosine to L-dihydroxyphenylalanine (L-Dopa), the rate-limiting step in the biosynthesis of catecholamines, dopamine, noradrenaline, and adrenaline. Uses tetrahydrobiopterin and molecular oxygen to convert tyrosine to L-Dopa. In addition to tyrosine, is able to catalyze the hydroxylation of phenylalanine and tryptophan with lower specificity. Positively regulates the regression of retinal hyaloid vessels during postnatal development. The polypeptide is Tyrosine 3-monooxygenase (TH) (Bos taurus (Bovine)).